A 562-amino-acid chain; its full sequence is MEFVIGLLIVLLALFAAGYFFRKKIYAEIDRLESWKIEILNRSIVEEMSKIKHLKMTGQTEEFFEKWREEWDEIVTAHMPKVEELLYDAEENADKYRFKKANQVLVHIDDLLTAAESSIEKILREISDLVTSEEKSREEIEQVRERYSKSRKNLLAYSHLYGELYDSLEKDLDEIWSGIKQFEEETEGGNYITARKVLLEQDRNLERLQSYIDDVPKLLADCKQTVPGQIAKLKDGYGEMKEKGYKLEHIQLDKELENLSNQLKRAEHVLMTELDIDEASAILQLIDENIQSVYQQLEGEVEAGQSVLSKMPELIIAYDKLKEEKEHTKAETELVKESYRLTAGELGKQQAFEKRLDEIGKLLSSVKDKLDAEHVAYSLLVEEVASIEKQIEEVKKEHAEYRENLQALRKEELQARETLSNLKKTISETARLLKTSNIPGIPSHIQEMLENAHHHIQETVNQLNELPLNMEEAGAHLKQAEDIVNRASRESEELVEQVILIEKIIQFGNRFRSQNHILSEQLKEAERRFYAFDYDDSYEIAAAAVEKAAPGAVEKIKADISA.

Topologically, residues 1–2 (ME) are extracellular. A helical transmembrane segment spans residues 3-21 (FVIGLLIVLLALFAAGYFF). Residues 22–562 (RKKIYAEIDR…VEKIKADISA (541 aa)) lie on the Cytoplasmic side of the membrane. Coiled-coil stretches lie at residues 377–425 (YSLL…LKKT) and 470–497 (MEEA…LVEQ).

It belongs to the EzrA family. May be degraded by FtsH protease.

It localises to the cell membrane. Its subcellular location is the membrane raft. Negative regulator of FtsZ ring formation; modulates the frequency and position of FtsZ ring formation. Inhibits FtsZ ring formation at polar sites. Interacts either with FtsZ or with one of its binding partners to promote depolymerization. In Bacillus subtilis (strain 168), this protein is Septation ring formation regulator EzrA.